The following is a 160-amino-acid chain: Nucleotide-binding protein BP2916 (160 aa).

This sequence belongs to the YajQ family.

Functionally, nucleotide-binding protein. This chain is Nucleotide-binding protein BP2916, found in Bordetella pertussis (strain Tohama I / ATCC BAA-589 / NCTC 13251).